Reading from the N-terminus, the 538-residue chain is Chaperonin GroEL (538 aa).

Residues 29 to 32 (TIGP), 86 to 90 (DGTTT), G413, 476 to 478 (NAA), and D492 each bind ATP.

The protein belongs to the chaperonin (HSP60) family. Forms a cylinder of 14 subunits composed of two heptameric rings stacked back-to-back. Interacts with the co-chaperonin GroES.

Its subcellular location is the cytoplasm. The enzyme catalyses ATP + H2O + a folded polypeptide = ADP + phosphate + an unfolded polypeptide.. Its function is as follows. Together with its co-chaperonin GroES, plays an essential role in assisting protein folding. The GroEL-GroES system forms a nano-cage that allows encapsulation of the non-native substrate proteins and provides a physical environment optimized to promote and accelerate protein folding. This chain is Chaperonin GroEL, found in Staphylococcus aureus (strain bovine RF122 / ET3-1).